Reading from the N-terminus, the 373-residue chain is Erythronate-4-phosphate dehydrogenase (373 aa).

Residues Ser-45 and Thr-66 each coordinate substrate. 2 residues coordinate NAD(+): Asp-146 and Thr-173. Arg-206 is an active-site residue. Position 230 (Asp-230) interacts with NAD(+). Glu-235 is an active-site residue. His-252 (proton donor) is an active-site residue. Gly-255 contacts NAD(+). Position 256 (Tyr-256) interacts with substrate.

The protein belongs to the D-isomer specific 2-hydroxyacid dehydrogenase family. PdxB subfamily. Homodimer.

The protein resides in the cytoplasm. The enzyme catalyses 4-phospho-D-erythronate + NAD(+) = (R)-3-hydroxy-2-oxo-4-phosphooxybutanoate + NADH + H(+). The protein operates within cofactor biosynthesis; pyridoxine 5'-phosphate biosynthesis; pyridoxine 5'-phosphate from D-erythrose 4-phosphate: step 2/5. Catalyzes the oxidation of erythronate-4-phosphate to 3-hydroxy-2-oxo-4-phosphonooxybutanoate. The sequence is that of Erythronate-4-phosphate dehydrogenase from Saccharophagus degradans (strain 2-40 / ATCC 43961 / DSM 17024).